Consider the following 335-residue polypeptide: MVIVLQPASFDSNLYVNPKCKPRPVLIPVIDLTDSDAKTQIVKACEEFGFFKVINHGVRPDLLTQLEQEAINFFALHHSLKDKAGPPDPFGYGTKRIGPNGDLGWLEYILLNANLCLESHKTTAIFRHTPAIFREAVEEYIKEMKRMSSKFLEMVEEELKIEPKEKLSRLVKVKESDSCLRMNHYPEKEETPVKEEIGFGEHTDPQLISLLRSNDTEGLQICVKDGTWVDVTPDHSSFFVLVGDTLQVMTNGRFKSVKHRVVTNTKRSRISMIYFAGPPLSEKIAPLSCLVPKQDDCLYNEFTWSQYKLSAYKTKLGDYRLGLFEKRPPFSLSNV.

The Fe2OG dioxygenase domain occupies 175–278 (ESDSCLRMNH…RISMIYFAGP (104 aa)). Fe cation-binding residues include His-202, Asp-204, and His-259. Residue Arg-269 is part of the active site.

Belongs to the iron/ascorbate-dependent oxidoreductase family. GA2OX subfamily. Fe(2+) is required as a cofactor. As to expression, not expressed in the apex.

The enzyme catalyses gibberellin A1 + 2-oxoglutarate + O2 = gibberellin A8 + succinate + CO2. Its pathway is plant hormone biosynthesis; gibberellin biosynthesis. Catalyzes the 2-beta-hydroxylation of several biologically active gibberellins, leading to the homeostatic regulation of their endogenous level. Catabolism of gibberellins (GAs) plays a central role in plant development. Converts GA9/GA20 to GA51/GA29 and GA4/GA1 to GA34/GA8. The chain is Gibberellin 2-beta-dioxygenase 3 (GA2OX3) from Arabidopsis thaliana (Mouse-ear cress).